The sequence spans 288 residues: Elongation factor Ts (288 aa).

Residues 79–82 form an involved in Mg(2+) ion dislocation from EF-Tu region; sequence TDFV.

It belongs to the EF-Ts family.

The protein localises to the cytoplasm. In terms of biological role, associates with the EF-Tu.GDP complex and induces the exchange of GDP to GTP. It remains bound to the aminoacyl-tRNA.EF-Tu.GTP complex up to the GTP hydrolysis stage on the ribosome. This chain is Elongation factor Ts, found in Ehrlichia chaffeensis (strain ATCC CRL-10679 / Arkansas).